Consider the following 540-residue polypeptide: Receptor-interacting serine/threonine-protein kinase 2 (540 aa).

In terms of domain architecture, Protein kinase spans Leu-18–Leu-294. ATP is bound by residues Leu-24–Val-32 and Lys-47. Positions Arg-65–Ala-73 are helix alphaC. Asp-146 serves as the catalytic Proton acceptor. An activation segment (AS) region spans residues Leu-167–Met-193. At Ser-168 the chain carries Phosphoserine. Position 174 is a phosphoserine; alternate (Ser-174). At Ser-176 the chain carries Phosphoserine; by autocatalysis. Position 178 is a phosphoserine; alternate (Ser-178). Ser-180 carries the phosphoserine modification. At Ser-181 the chain carries Phosphoserine; alternate. A Glycyl lysine isopeptide (Lys-Gly) (interchain with G-Cter in ubiquitin) cross-link involves residue Lys-209. The interval Ser-318 to Pro-367 is disordered. Over residues His-322 to Leu-331 the composition is skewed to basic and acidic residues. Residues Cys-346–Ala-366 show a composition bias toward polar residues. A phosphoserine mark is found at Ser-363 and Ser-391. Positions Gly-432–Leu-524 constitute a CARD domain. A Phosphotyrosine; by autocatalysis modification is found at Tyr-472. 3 positions are modified to phosphoserine: Ser-525, Ser-527, and Ser-529. Lys-536 participates in a covalent cross-link: Glycyl lysine isopeptide (Lys-Gly) (interchain with G-Cter in ubiquitin). A Phosphoserine modification is found at Ser-537.

It belongs to the protein kinase superfamily. TKL Ser/Thr protein kinase family. Interacts (via CARD domain) with NOD2 (via CARD domain). Interacts (via CARD domain) with NOD1 (via CARD domain). Homooligomer; following interaction with NOD1 or NOD2, homooligomerizes via its CARD domain and forms long filaments named RIPosomes. Found in a signaling complex consisting of at least ARHGEF2, NOD2 and RIPK2. Interacts with ARHGEF2; the interaction mediates tyrosine phosphorylation of RIPK2 by Src kinase CSK. Interacts with MAP3K4; this interaction sequesters RIPK2 from the NOD2 signaling pathway. Interacts with IKBKG/NEMO. The polyubiquitinated protein interacts with MAP3K7/TAK1; interaction is indirect and is mediated by TAB2 and TAB3 that bind to polyubiquitin chains attached to RIPK2. Binds to CFLAR/CLARP and CASP1 via their CARD domains. Binds to BIRC3/c-IAP1 and BIRC2/c-IAP2, TRAF1, TRAF2, TRAF5 and TRAF6. Interacts with NLRP10. Interacts with CARD9. Interacts with INAVA; the interaction takes place upon PRR stimulation. Interacts (via CARD domain) with NGFR (via death domain). Interacts with IRGM; promoting RIPK2 degradation. Post-translationally, polyubiquitinated via both 'Lys-63'- and 'Met-1'-linked polyubiquitin following recruitment by NOD1 or NOD2, creating docking sites for downstream effectors, triggering activation of the NF-kappa-B and MAP kinases signaling. 'Lys-63'-linked polyubiquitination by XIAP is essential for NOD2 signaling and promotes recruitment of the LUBAC complex. Also polyubiquitinated with 'Lys-63'-linked chains by PELI3, BIRC2/c-IAP1 and BIRC3/c-IAP2. Ubiquitinated on Lys-209 via 'Lys-63'-linked by ITCH. Undergoes 'Lys-63'-linked deubiquitination by MYSM1 to attenuate NOD2-mediated inflammation and tissue damage. Polyubiquitinated with 'Lys-63'-linked chains in response to Shigella infection, promoting its SQSTM1/p62-dependent autophagic degradation. Undergoes 'Met-1'-linked polyubiquitination; the head-to-tail linear polyubiquitination is mediated by the LUBAC complex in response to NOD2 stimulation 'Met-1'-linked polyubiquitination. 'Lys-63'-linked polyubiquitination by XIAP is required for recruimtent of the LUBAC complex and subsequent. Linear polyubiquitination is restricted by FAM105B/otulin, probably to limit NOD2-dependent pro-inflammatory signaling activation of NF-kappa-B. Autophosphorylated. Phosphorylated at Ser-176, either via autophosphorylation or by LRRK2, enhancing activity. Autophosphorylation at Tyr-472 is required for effective NOD2 signaling. Autophosphorylation is however not essential for NOD2 signaling. In terms of processing, degraded via selective autophagy following interaction with IRGM. IRGM promotes NOD1/NOD2-RIPK2 RIPosome recruitment to autophagosome membranes. RIPK2 biquitinated via 'Lys-63'-linked chains is then recognized by SQSTM1/p62, leading to the SQSTM1/p62-dependent autophagic degradation of the NOD1/NOD2-RIPK2 RIPosome.

Its subcellular location is the cytoplasm. It localises to the cell membrane. It is found in the endoplasmic reticulum. The catalysed reaction is L-seryl-[protein] + ATP = O-phospho-L-seryl-[protein] + ADP + H(+). It catalyses the reaction L-threonyl-[protein] + ATP = O-phospho-L-threonyl-[protein] + ADP + H(+). The enzyme catalyses L-tyrosyl-[protein] + ATP = O-phospho-L-tyrosyl-[protein] + ADP + H(+). With respect to regulation, in the inactive state, the helix alphaC is packed against the helical, non-phosphorylated activation segment (AS). Upon activation, helix alphaC is displaced and the phosphorylated AS becomes disordered. Its function is as follows. Serine/threonine/tyrosine-protein kinase that plays an essential role in modulation of innate and adaptive immune responses. Acts as a key effector of NOD1 and NOD2 signaling pathways: upon activation by bacterial peptidoglycans, NOD1 and NOD2 oligomerize and recruit RIPK2 via CARD-CARD domains, leading to the formation of RIPK2 filaments. Once recruited, RIPK2 autophosphorylates and undergoes 'Lys-63'-linked polyubiquitination by E3 ubiquitin ligases XIAP, BIRC2 and BIRC3, as well as 'Met-1'-linked (linear) polyubiquitination by the LUBAC complex, becoming a scaffolding protein for downstream effectors. 'Met-1'-linked polyubiquitin chains attached to RIPK2 recruit IKBKG/NEMO, which undergoes 'Lys-63'-linked polyubiquitination in a RIPK2-dependent process. 'Lys-63'-linked polyubiquitin chains attached to RIPK2 serve as docking sites for TAB2 and TAB3 and mediate the recruitment of MAP3K7/TAK1 to IKBKG/NEMO, inducing subsequent activation of IKBKB/IKKB. In turn, NF-kappa-B is released from NF-kappa-B inhibitors and translocates into the nucleus where it activates the transcription of hundreds of genes involved in immune response, growth control, or protection against apoptosis. The protein kinase activity is dispensable for the NOD1 and NOD2 signaling pathways. Contributes to the tyrosine phosphorylation of the guanine exchange factor ARHGEF2 through Src tyrosine kinase leading to NF-kappa-B activation by NOD2. Also involved in adaptive immunity: plays a role during engagement of the T-cell receptor (TCR) in promoting BCL10 phosphorylation and subsequent NF-kappa-B activation. Plays a role in the inactivation of RHOA in response to NGFR signaling. This chain is Receptor-interacting serine/threonine-protein kinase 2 (RIPK2), found in Bos taurus (Bovine).